Consider the following 186-residue polypeptide: MKTAHEIRPGNVIMLDGSPWVVQKTETTRSGRNAAIVKLKLKNVLLDSGTEQTFKGEDKLDDIILERLDCTYSYFADPMYVFMDEEYNQYDVEADNLGDAADYIIDGMEDVCQVTFYEGKAISVELPVHIVREVIYTEPSARGDTSGKVMKPATITGGGTVTVADFVKVGDKIEIDTRTGEFKKRV.

The protein belongs to the elongation factor P family.

It localises to the cytoplasm. It functions in the pathway protein biosynthesis; polypeptide chain elongation. In terms of biological role, involved in peptide bond synthesis. Stimulates efficient translation and peptide-bond synthesis on native or reconstituted 70S ribosomes in vitro. Probably functions indirectly by altering the affinity of the ribosome for aminoacyl-tRNA, thus increasing their reactivity as acceptors for peptidyl transferase. This Shewanella frigidimarina (strain NCIMB 400) protein is Elongation factor P.